The following is a 102-amino-acid chain: MPGQKIRIKLKAYDHELLDESAKKIVEVAKSTNSKVSGPIPLPTERTLYCVLRSPMKHKDSREHFEKRVHKRLIDIIDPSPKTIDALMRINLPAGVDVEIKL.

Belongs to the universal ribosomal protein uS10 family. In terms of assembly, part of the 30S ribosomal subunit.

In terms of biological role, involved in the binding of tRNA to the ribosomes. The polypeptide is Small ribosomal subunit protein uS10 (Thermotoga maritima (strain ATCC 43589 / DSM 3109 / JCM 10099 / NBRC 100826 / MSB8)).